Consider the following 574-residue polypeptide: Ankyrin repeat protein B18 (574 aa).

6 ANK repeats span residues 56 to 87 (TGYT…NVTM), 135 to 164 (IKSR…DPNF), 167 to 213 (DGYT…NLNA), 217 to 249 (CGNT…NFKI), 253 to 285 (HGLT…NVGE), and 327 to 356 (EGKT…DINA). An F-box domain is found at 541-574 (NCLLTLLPSEIIYEILYMLTINDLYNISYPPTKV).

This chain is Ankyrin repeat protein B18, found in Homo sapiens (Human).